The following is a 211-amino-acid chain: Uracil phosphoribosyltransferase (211 aa).

Residues Arg79, Arg104, and 131-139 each bind 5-phospho-alpha-D-ribose 1-diphosphate; that span reads DPMLATGGS. Uracil-binding positions include Ile196 and 201-203; that span reads GDA. Asp202 contacts 5-phospho-alpha-D-ribose 1-diphosphate.

It belongs to the UPRTase family. Mg(2+) serves as cofactor.

The catalysed reaction is UMP + diphosphate = 5-phospho-alpha-D-ribose 1-diphosphate + uracil. The protein operates within pyrimidine metabolism; UMP biosynthesis via salvage pathway; UMP from uracil: step 1/1. Allosterically activated by GTP. Functionally, catalyzes the conversion of uracil and 5-phospho-alpha-D-ribose 1-diphosphate (PRPP) to UMP and diphosphate. This Lactococcus lactis subsp. cremoris (strain SK11) protein is Uracil phosphoribosyltransferase.